The sequence spans 214 residues: Small ribosomal subunit protein uS5 (214 aa).

Residues 1–61 (MTDSSPQSNP…QERDSEWQER (61 aa)) form a disordered region. Residues 9–29 (NPNAVPGAADVPAAAEGQQQQ) are compositionally biased toward low complexity. Basic and acidic residues predominate over residues 30–60 (EQRRGRGDRDGRRGDRRGGRRGQERDSEWQE). One can recognise an S5 DRBM domain in the interval 58 to 121 (WQERVVQIRR…ADGKKHLVKV (64 aa)).

Belongs to the universal ribosomal protein uS5 family. Part of the 30S ribosomal subunit. Contacts proteins S4 and S8.

In terms of biological role, with S4 and S12 plays an important role in translational accuracy. Its function is as follows. Located at the back of the 30S subunit body where it stabilizes the conformation of the head with respect to the body. The sequence is that of Small ribosomal subunit protein uS5 from Synechococcus sp. (strain CC9605).